The following is a 235-amino-acid chain: tRNA (guanine-N(1)-)-methyltransferase (235 aa).

Residues Gly-114 and 134-139 (VGDYIL) each bind S-adenosyl-L-methionine.

The protein belongs to the RNA methyltransferase TrmD family. In terms of assembly, homodimer.

Its subcellular location is the cytoplasm. The enzyme catalyses guanosine(37) in tRNA + S-adenosyl-L-methionine = N(1)-methylguanosine(37) in tRNA + S-adenosyl-L-homocysteine + H(+). Its function is as follows. Specifically methylates guanosine-37 in various tRNAs. The chain is tRNA (guanine-N(1)-)-methyltransferase from Chelativorans sp. (strain BNC1).